The following is a 110-amino-acid chain: DNA-directed RNA polymerase subunit omega (110 aa).

The protein belongs to the RNA polymerase subunit omega family. The RNAP catalytic core consists of 2 alpha, 1 beta, 1 beta' and 1 omega subunit. When a sigma factor is associated with the core the holoenzyme is formed, which can initiate transcription.

The enzyme catalyses RNA(n) + a ribonucleoside 5'-triphosphate = RNA(n+1) + diphosphate. Its function is as follows. Promotes RNA polymerase assembly. Latches the N- and C-terminal regions of the beta' subunit thereby facilitating its interaction with the beta and alpha subunits. The chain is DNA-directed RNA polymerase subunit omega from Nocardioides sp. (strain ATCC BAA-499 / JS614).